Consider the following 53-residue polypeptide: MPQLNPEPWLTTFLIVWISLIVILQPKIASLMLTSSPTPYKAMTIKTWPWPWT.

A helical membrane pass occupies residues Pro8 to Leu24.

This sequence belongs to the ATPase protein 8 family. In terms of assembly, component of the ATP synthase complex composed at least of ATP5F1A/subunit alpha, ATP5F1B/subunit beta, ATP5MC1/subunit c (homooctomer), MT-ATP6/subunit a, MT-ATP8/subunit 8, ATP5ME/subunit e, ATP5MF/subunit f, ATP5MG/subunit g, ATP5MK/subunit k, ATP5MJ/subunit j, ATP5F1C/subunit gamma, ATP5F1D/subunit delta, ATP5F1E/subunit epsilon, ATP5PF/subunit F6, ATP5PB/subunit b, ATP5PD/subunit d, ATP5PO/subunit OSCP. ATP synthase complex consists of a soluble F(1) head domain (subunits alpha(3) and beta(3)) - the catalytic core - and a membrane F(0) domain - the membrane proton channel (subunits c, a, 8, e, f, g, k and j). These two domains are linked by a central stalk (subunits gamma, delta, and epsilon) rotating inside the F1 region and a stationary peripheral stalk (subunits F6, b, d, and OSCP).

The protein localises to the mitochondrion membrane. Subunit 8, of the mitochondrial membrane ATP synthase complex (F(1)F(0) ATP synthase or Complex V) that produces ATP from ADP in the presence of a proton gradient across the membrane which is generated by electron transport complexes of the respiratory chain. ATP synthase complex consist of a soluble F(1) head domain - the catalytic core - and a membrane F(1) domain - the membrane proton channel. These two domains are linked by a central stalk rotating inside the F(1) region and a stationary peripheral stalk. During catalysis, ATP synthesis in the catalytic domain of F(1) is coupled via a rotary mechanism of the central stalk subunits to proton translocation. In vivo, can only synthesize ATP although its ATP hydrolase activity can be activated artificially in vitro. Part of the complex F(0) domain. This is ATP synthase F(0) complex subunit 8 from Alligator mississippiensis (American alligator).